The following is a 102-amino-acid chain: Large ribosomal subunit protein uL24c (102 aa).

It belongs to the universal ribosomal protein uL24 family. As to quaternary structure, part of the 50S ribosomal subunit.

It is found in the plastid. The protein resides in the chloroplast. In terms of biological role, one of two assembly initiator proteins, it binds directly to the 5'-end of the 23S rRNA, where it nucleates assembly of the 50S subunit. The sequence is that of Large ribosomal subunit protein uL24c (rpl24) from Rhodomonas salina (Cryptomonas salina).